Consider the following 301-residue polypeptide: Homoserine O-acetyltransferase (301 aa).

The active-site Acyl-thioester intermediate is C142. Substrate-binding residues include K163 and S192. H235 (proton acceptor) is an active-site residue. The active site involves E237. R249 is a substrate binding site.

It belongs to the MetA family. As to quaternary structure, homodimer.

The protein localises to the cytoplasm. It carries out the reaction L-homoserine + acetyl-CoA = O-acetyl-L-homoserine + CoA. Its pathway is amino-acid biosynthesis; L-methionine biosynthesis via de novo pathway; O-acetyl-L-homoserine from L-homoserine: step 1/1. In terms of biological role, transfers an acetyl group from acetyl-CoA to L-homoserine, forming acetyl-L-homoserine. Utilizes a ping-pong kinetic mechanism in which the acetyl group of acetyl-CoA is initially transferred to the enzyme to form an acetyl-enzyme intermediate before subsequent transfer to homoserine to form the final product, O-acetylhomoserine. Cannot use succinyl-CoA as the acyl donor. This chain is Homoserine O-acetyltransferase, found in Bacillus cereus (strain ATCC 10987 / NRS 248).